A 231-amino-acid chain; its full sequence is tRNA1(Val) (adenine(37)-N6)-methyltransferase (231 aa).

The protein belongs to the methyltransferase superfamily. tRNA (adenine-N(6)-)-methyltransferase family.

Its subcellular location is the cytoplasm. The catalysed reaction is adenosine(37) in tRNA1(Val) + S-adenosyl-L-methionine = N(6)-methyladenosine(37) in tRNA1(Val) + S-adenosyl-L-homocysteine + H(+). Functionally, specifically methylates the adenine in position 37 of tRNA(1)(Val) (anticodon cmo5UAC). This Flavobacteriaceae bacterium (strain 3519-10) protein is tRNA1(Val) (adenine(37)-N6)-methyltransferase.